The chain runs to 207 residues: Dephospho-CoA kinase (207 aa).

One can recognise a DPCK domain in the interval Val4–Phe204. Position 12–17 (Gly12–Thr17) interacts with ATP.

The protein belongs to the CoaE family.

It is found in the cytoplasm. It catalyses the reaction 3'-dephospho-CoA + ATP = ADP + CoA + H(+). It functions in the pathway cofactor biosynthesis; coenzyme A biosynthesis; CoA from (R)-pantothenate: step 5/5. Its function is as follows. Catalyzes the phosphorylation of the 3'-hydroxyl group of dephosphocoenzyme A to form coenzyme A. This chain is Dephospho-CoA kinase, found in Aggregatibacter actinomycetemcomitans (Actinobacillus actinomycetemcomitans).